A 177-amino-acid chain; its full sequence is 2''-aminoglycoside nucleotidyltransferase (177 aa).

The N-terminal domain stretch occupies residues 1 to 92 (MDTTQVTLIH…ELLDCEPAWW (92 aa)). Residues Asp44, Asp46, and Asp86 each coordinate Mg(2+). Asp86 serves as the catalytic Proton acceptor. Positions 93–177 (ADEAYEIAEA…RAAFRSRYAA (85 aa)) are C-terminal domain. A kanamycin A-binding site is contributed by Ala100.

In terms of assembly, monomer. It depends on Mg(2+) as a cofactor.

The catalysed reaction is nucleoside triphosphate + gentamicin = diphosphate + 2''-nucleotidylgentamicin.. Its function is as follows. Mediates bacterial resistance to kanamycin, gentamicin, dibekacin, sisomicin and tobramycin by adenylating the 2''-hydroxyl group of these antibiotics. This chain is 2''-aminoglycoside nucleotidyltransferase, found in Klebsiella pneumoniae.